A 528-amino-acid chain; its full sequence is Dihydromonacolin L monooxygenase LovA (528 aa).

Residues M1–H23 are Cytoplasmic-facing. Residues G24–L44 form a helical; Signal-anchor for type II membrane protein membrane-spanning segment. The Lumenal segment spans residues C45 to L528. N-linked (GlcNAc...) asparagine glycosylation is present at N399. C465 is a heme binding site.

It belongs to the cytochrome P450 family. It depends on heme as a cofactor.

It localises to the membrane. It is found in the endoplasmic reticulum membrane. The enzyme catalyses dihydromonacolin L carboxylate + reduced [NADPH--hemoprotein reductase] + O2 = monacolin L carboxylate + oxidized [NADPH--hemoprotein reductase] + 2 H2O + H(+). The catalysed reaction is monacolin L carboxylate + reduced [NADPH--hemoprotein reductase] + O2 = monacolin J carboxylate + oxidized [NADPH--hemoprotein reductase] + H2O + H(+). It participates in polyketide biosynthesis; lovastatin biosynthesis. Functionally, dihydromonacolin L monooxygenase; part of the gene cluster that mediates the biosynthesis of lovastatin (also known as mevinolin, mevacor or monacolin K), a hypolipidemic inhibitor of (3S)-hydroxymethylglutaryl-coenzyme A (HMG-CoA) reductase (HMGR). The first step in the biosynthesis of lovastatin is the production of dihydromonacolin L acid by the lovastatin nonaketide synthase lovB and the trans-acting enoyl reductase lovC via condensation of one acetyl-CoA unit and 8 malonyl-CoA units. Dihydromonacolin L acid is released from lovB by the thioesterase lovG. Next, dihydromonacolin L acid is oxidized by the dihydromonacolin L monooxygenase lovA twice to form monacolin J acid. The 2-methylbutyrate moiety of lovastatin is synthesized by the lovastatin diketide synthase lovF via condensation of one acetyl-CoA unit and one malonyl-CoA unit. Finally, the covalent attachment of this moiety to monacolin J acid is catalyzed by the transesterase lovD to yield lovastatin. LovD has broad substrate specificity and can also convert monacolin J to simvastatin using alpha-dimethylbutanoyl-S-methyl-3-mercaptopropionate (DMB-S-MMP) as the thioester acyl donor, and can also catalyze the reverse reaction and function as hydrolase in vitro. LovD has much higher activity with LovF-bound 2-methylbutanoate than with free diketide substrates. The sequence is that of Dihydromonacolin L monooxygenase LovA from Aspergillus terreus (strain NIH 2624 / FGSC A1156).